We begin with the raw amino-acid sequence, 243 residues long: Pleckstrin homology domain-containing family B member 1 (243 aa).

Positions 21–128 (ALVRGGWLWR…WKTALMEANS (108 aa)) constitute a PH domain.

Binds transducins. Homodimer. Interacts (via PH domain) with MYO1C. Interacts (via PH domain) with MYO7A. Highly expressed in retina and brain. In retina, abundantly expressed in photoreceptors. Isoform 4 is the predominant isoform expressed in mature olfactory receptor neurons and vestibular and cochlear hair cells. Also expressed in cells with possible sensory function, including peripheral retinal ganglion cells, cochlear interdental cells, and neurons of the circumventricular organ (at protein level).

Its subcellular location is the membrane. It is found in the cytoplasm. The chain is Pleckstrin homology domain-containing family B member 1 (Plekhb1) from Mus musculus (Mouse).